Consider the following 182-residue polypeptide: MQTDYAELVRRTIRSVPDWPTPGVTFRDITPVLQDPRTFRVLIDLFVYRYMRQRLDLVAGVDARGFIVGAVLAHELNLGFVPVRKKSKLPYRTVAEEYSLEYGNAAVEMHTDSVRTGQRVLLVDDLIDTGGTMLAAIKLLQRLGANVVEAAAIIDLPYLGGSAQITATGTPLYTVCQYQEGD.

It belongs to the purine/pyrimidine phosphoribosyltransferase family. As to quaternary structure, homodimer.

The protein resides in the cytoplasm. It catalyses the reaction AMP + diphosphate = 5-phospho-alpha-D-ribose 1-diphosphate + adenine. Its pathway is purine metabolism; AMP biosynthesis via salvage pathway; AMP from adenine: step 1/1. Catalyzes a salvage reaction resulting in the formation of AMP, that is energically less costly than de novo synthesis. The chain is Adenine phosphoribosyltransferase from Bordetella pertussis (strain Tohama I / ATCC BAA-589 / NCTC 13251).